Here is a 543-residue protein sequence, read N- to C-terminus: CTP synthase (543 aa).

The interval 1–265 (MTRYIFVTGG…DDFVVERFGL (265 aa)) is amidoligase domain. Position 13 (S13) interacts with CTP. S13 is a binding site for UTP. Residues 14–19 (SLGKGI) and D71 contribute to the ATP site. Mg(2+) contacts are provided by D71 and E139. Residues 146 to 148 (DIE), 186 to 191 (KTKPTQ), and K222 contribute to the CTP site. UTP-binding positions include 186 to 191 (KTKPTQ) and K222. The Glutamine amidotransferase type-1 domain maps to 290-541 (TIAMVGKYME…VKAALAQHQK (252 aa)). G351 lines the L-glutamine pocket. Residue C378 is the Nucleophile; for glutamine hydrolysis of the active site. Residues 379–382 (LGMQ), E402, and R469 each bind L-glutamine. Active-site residues include H514 and E516.

It belongs to the CTP synthase family. Homotetramer.

The enzyme catalyses UTP + L-glutamine + ATP + H2O = CTP + L-glutamate + ADP + phosphate + 2 H(+). The catalysed reaction is L-glutamine + H2O = L-glutamate + NH4(+). It carries out the reaction UTP + NH4(+) + ATP = CTP + ADP + phosphate + 2 H(+). The protein operates within pyrimidine metabolism; CTP biosynthesis via de novo pathway; CTP from UDP: step 2/2. With respect to regulation, allosterically activated by GTP, when glutamine is the substrate; GTP has no effect on the reaction when ammonia is the substrate. The allosteric effector GTP functions by stabilizing the protein conformation that binds the tetrahedral intermediate(s) formed during glutamine hydrolysis. Inhibited by the product CTP, via allosteric rather than competitive inhibition. Catalyzes the ATP-dependent amination of UTP to CTP with either L-glutamine or ammonia as the source of nitrogen. Regulates intracellular CTP levels through interactions with the four ribonucleotide triphosphates. The sequence is that of CTP synthase from Pseudomonas savastanoi pv. phaseolicola (strain 1448A / Race 6) (Pseudomonas syringae pv. phaseolicola (strain 1448A / Race 6)).